The sequence spans 30 residues: Cycloviolacin-O9 (30 aa).

Residues 1–30 (GIPCGESCVWIPCLTSAVGCSCKSKVCYRN) constitute a cross-link (cyclopeptide (Gly-Asn)). 3 cysteine pairs are disulfide-bonded: C4/C20, C8/C22, and C13/C27.

In terms of processing, this is a cyclic peptide.

Functionally, probably participates in a plant defense mechanism. The sequence is that of Cycloviolacin-O9 from Viola odorata (Sweet violet).